The primary structure comprises 1447 residues: MGARASVLSGGELDRWEKIRLRPGGKKKYKLKHIVWASRELERFAVNPGLLETSEGCRQILGQLQPSLQTGSEELRSLYNTVATLYCVHQRIEIKDTKEALDKIEEEQNKSKKKAQQAAADTGHSSQVSQNYPIVQNIQGQMVHQAISPRTLNAWVKVVEEKAFSPEVIPMFSALSEGATPQDLNTMLNTVGGHQAAMQMLKETINEEAAEWDRVHPVHAGPIAPGQMREPRGSDIAGTTSTLQEQIGWMTNNPPIPVGEIYKRWIILGLNKIVRMYSPTSILDIRQGPKEPFRDYVDRFYKTLRAEQASQEVKNWMTETLLVQNANPDCKTILKALGPAATLEEMMTACQGVGGPGHKARVLAEAMSQVTNSTTIMMQRGNFRNQRKIVKCFNCGKEGHIARNCKAPRKKGCWKCGKEGHQMKDCTERQANFLREDLAFLQGKAREFSSEQTRANSPTISSEQTRANSPTRRELQVWGRDNNSPSEAGADRQGTVSFNFPQITLWQRPLVTIKIGGQLKEALLDTGADDTVLEEMSLPGRWKPKMIGGIGGFIKVRQYDQILIEICGHKAIGTVLVGPTPVNIIGRNLLTQIGCTLNFPISPIETVPVKLKPGMDGPKVKQWPLTEEKIKALVEICTEMEKEGKISKIGPENPYNTPVFAIKKKDSTKWRKLVDFRELNRRTQDFWEVQLGIPHPAGLKKKKSVTVLDVGDAYFSVPLDEDFRKYTAFTIPSINNETPGSGYQYNVLPQGWKGSPAIFQSSMTKILEPFRKQNPDIVIYQYMDDLYVGSDLEIGQHRTKIEELRQHLLRWGFTTPDKKHQKEPPFLWMGYELHPDKWTIQPIVLPEKDSWTVNDIQKLVGKLNWASQIYPGIKVRQLCKLLRGTKALTEVIPLTEEAELELAENREILKEPVHGVYYDPSKDLIAEIQKQGQGQWTYQIYQEPFKNLKTGKYARMRGAHTNDVKQLTEAVQKITTESIVIWGKTPKFKLPIQKETWETWWTEYWQATWIPEWEFVNTPPLVKLWYQLEKEPIVGAETFYVDGAASRETKLGKAGYVTNRGRQKVVTLTHTTNQKTELQAIHLALQDSGLEVNIVTDSQYALGIIQAQPDKSESELVNQIIEQLIKKEKVYLAWVPAHKGIGGNEQVDKLVSAGIRKILFLDGIDKAQEEHEKYHSNWRAMASDFNLPPVVAKEIVASCDKCQLKGEAMHGQVDCSPGIWQLDCTHLEGKVILVAVHVASGYIEAEVIPAETGQETAYFLLKLAGRWPVKTIHTDNGSNFTSATVKAACWWAGIKQEFGIPYNPQSQGVVESMNKELKKIIGQVRDQAEHLKTAVQMAVFIHNFKRKGGIGGYSAGERIVDIIATDIQTKELQKQITKIQNFRVYYRDSRNPLWKGPAKLLWKGEGAVVIQDNSDIKVVPRRKAKIIRDYGKQMAGDDCVASRQDED.

The N-myristoyl glycine; by host moiety is linked to residue Gly2. The interval 7–31 (VLSGGELDRWEKIRLRPGGKKKYKL) is interaction with Gp41. Residues 8 to 43 (LSGGELDRWEKIRLRPGGKKKYKLKHIVWASRELER) are interaction with host CALM1. Residues 12-19 (ELDRWEKI) form an interaction with host AP3D1 region. An interaction with membrane phosphatidylinositol 4,5-bisphosphate and RNA region spans residues 14 to 33 (DRWEKIRLRPGGKKKYKLKH). Positions 16 to 22 (WEKIRLR) match the Nuclear export signal motif. The short motif at 26–32 (KKKYKLK) is the Nuclear localization signal element. Residues 73–77 (EELRS) are interaction with membrane phosphatidylinositol 4,5-bisphosphate. Residues 106 to 128 (EEQNKSKKKAQQAAADTGHSSQV) are disordered. Residue Tyr132 is modified to Phosphotyrosine; by host. Positions 189-227 (NTVGGHQAAMQMLKETINEEAAEWDRVHPVHAGPIAPGQ) are interaction with human PPIA/CYPA and NUP153. The interval 277–363 (YSPTSILDIR…GGPGHKARVL (87 aa)) is dimerization/Multimerization of capsid protein p24. 2 consecutive CCHC-type zinc fingers follow at residues 390–407 (VKCF…NCKA) and 411–428 (KGCW…DCTE). Residues 446 to 493 (REFSSEQTRANSPTISSEQTRANSPTRRELQVWGRDNNSPSEAGADRQ) form a disordered region. A compositionally biased stretch (polar residues) spans 450 to 470 (SEQTRANSPTISSEQTRANSP). Positions 501 to 505 (PQITL) are dimerization of protease. Residues 520–589 (KEALLDTGAD…TPVNIIGRNL (70 aa)) enclose the Peptidase A2 domain. The For protease activity; shared with dimeric partner role is filled by Asp525. Dimerization of protease regions lie at residues 549–555 (GIGGFIK) and 588–600 (NLLT…LNFP). In terms of domain architecture, Reverse transcriptase spans 643–833 (EGKISKIGPE…PPFLWMGYEL (191 aa)). Positions 709, 784, and 785 each coordinate Mg(2+). An RT 'primer grip' region spans residues 826-834 (FLWMGYELH). Residues 997-1013 (WETWWTEYWQATWIPEW) carry the Tryptophan repeat motif motif. The 124-residue stretch at 1033 to 1156 (IVGAETFYVD…VDKLVSAGIR (124 aa)) folds into the RNase H type-1 domain. Residues Asp1042, Glu1077, Asp1097, and Asp1148 each coordinate Mg(2+). The Integrase-type zinc-finger motif lies at 1162 to 1203 (DGIDKAQEEHEKYHSNWRAMASDFNLPPVVAKEIVASCDKCQ). Positions 1171, 1175, 1199, and 1202 each coordinate Zn(2+). Residues 1213–1363 (VDCSPGIWQL…SAGERIVDII (151 aa)) enclose the Integrase catalytic domain. Mg(2+)-binding residues include Asp1223, Asp1275, and Glu1311. A DNA-binding region (integrase-type) is located at residues 1382-1429 (FRVYYRDSRNPLWKGPAKLLWKGEGAVVIQDNSDIKVVPRRKAKIIRD).

In terms of assembly, homotrimer; further assembles as hexamers of trimers. Interacts with gp41 (via C-terminus). Interacts with host CALM1; this interaction induces a conformational change in the Matrix protein, triggering exposure of the myristate group. Interacts with host AP3D1; this interaction allows the polyprotein trafficking to multivesicular bodies during virus assembly. Part of the pre-integration complex (PIC) which is composed of viral genome, matrix protein, Vpr and integrase. Homodimer; the homodimer further multimerizes as homohexamers or homopentamers. Interacts with human PPIA/CYPA; This interaction stabilizes the capsid. Interacts with human NUP153. Interacts with host PDZD8; this interaction stabilizes the capsid. Interacts with monkey TRIM5; this interaction destabilizes the capsid. As to quaternary structure, homodimer, whose active site consists of two apposed aspartic acid residues. In terms of assembly, heterodimer of p66 RT and p51 RT (RT p66/p51). Heterodimerization of RT is essential for DNA polymerase activity. The overall folding of the subdomains is similar in p66 RT and p51 RT but the spatial arrangements of the subdomains are dramatically different. Homotetramer; may further associate as a homohexadecamer. Part of the pre-integration complex (PIC) which is composed of viral genome, matrix protein, Vpr and integrase. Interacts with human SMARCB1/INI1 and human PSIP1/LEDGF isoform 1. Interacts with human KPNA3; this interaction might play a role in nuclear import of the pre-integration complex. Interacts with human NUP153; this interaction might play a role in nuclear import of the pre-integration complex. It depends on Mg(2+) as a cofactor. Specific enzymatic cleavages by the viral protease yield mature proteins. The protease is released by autocatalytic cleavage. The polyprotein is cleaved during and after budding, this process is termed maturation. Proteolytic cleavage of p66 RT removes the RNase H domain to yield the p51 RT subunit. Nucleocapsid protein p7 might be further cleaved after virus entry. Post-translationally, tyrosine phosphorylated presumably in the virion by a host kinase. Phosphorylation is apparently not a major regulator of membrane association. In terms of processing, phosphorylated possibly by host MAPK1; this phosphorylation is necessary for Pin1-mediated virion uncoating. Methylated by host PRMT6, impairing its function by reducing RNA annealing and the initiation of reverse transcription.

Its subcellular location is the host cell membrane. The protein localises to the host endosome. The protein resides in the host multivesicular body. It localises to the virion membrane. It is found in the host nucleus. Its subcellular location is the host cytoplasm. The protein localises to the virion. It carries out the reaction Specific for a P1 residue that is hydrophobic, and P1' variable, but often Pro.. The catalysed reaction is Endohydrolysis of RNA in RNA/DNA hybrids. Three different cleavage modes: 1. sequence-specific internal cleavage of RNA. Human immunodeficiency virus type 1 and Moloney murine leukemia virus enzymes prefer to cleave the RNA strand one nucleotide away from the RNA-DNA junction. 2. RNA 5'-end directed cleavage 13-19 nucleotides from the RNA end. 3. DNA 3'-end directed cleavage 15-20 nucleotides away from the primer terminus.. The enzyme catalyses 3'-end directed exonucleolytic cleavage of viral RNA-DNA hybrid.. It catalyses the reaction DNA(n) + a 2'-deoxyribonucleoside 5'-triphosphate = DNA(n+1) + diphosphate. With respect to regulation, protease: The viral protease is inhibited by many synthetic protease inhibitors (PIs), such as amprenavir, atazanavir, indinavir, loprinavir, nelfinavir, ritonavir and saquinavir. Use of protease inhibitors in tritherapy regimens permit more ambitious therapeutic strategies. Reverse transcriptase/ribonuclease H: RT can be inhibited either by nucleoside RT inhibitors (NRTIs) or by non nucleoside RT inhibitors (NNRTIs). NRTIs act as chain terminators, whereas NNRTIs inhibit DNA polymerization by binding a small hydrophobic pocket near the RT active site and inducing an allosteric change in this region. Classical NRTIs are abacavir, adefovir (PMEA), didanosine (ddI), lamivudine (3TC), stavudine (d4T), tenofovir (PMPA), zalcitabine (ddC), and zidovudine (AZT). Classical NNRTIs are atevirdine (BHAP U-87201E), delavirdine, efavirenz (DMP-266), emivirine (I-EBU), and nevirapine (BI-RG-587). The tritherapies used as a basic effective treatment of AIDS associate two NRTIs and one NNRTI. In terms of biological role, mediates, with Gag polyprotein, the essential events in virion assembly, including binding the plasma membrane, making the protein-protein interactions necessary to create spherical particles, recruiting the viral Env proteins, and packaging the genomic RNA via direct interactions with the RNA packaging sequence (Psi). Gag-Pol polyprotein may regulate its own translation, by the binding genomic RNA in the 5'-UTR. At low concentration, the polyprotein would promote translation, whereas at high concentration, the polyprotein would encapsidate genomic RNA and then shut off translation. Its function is as follows. Targets the polyprotein to the plasma membrane via a multipartite membrane-binding signal, that includes its myristoylated N-terminus. Matrix protein is part of the pre-integration complex. Implicated in the release from host cell mediated by Vpu. Binds to RNA. Functionally, forms the conical core that encapsulates the genomic RNA-nucleocapsid complex in the virion. Most core are conical, with only 7% tubular. The core is constituted by capsid protein hexamer subunits. The core is disassembled soon after virion entry. Host restriction factors such as TRIM5-alpha or TRIMCyp bind retroviral capsids and cause premature capsid disassembly, leading to blocks in reverse transcription. Capsid restriction by TRIM5 is one of the factors which restricts HIV-1 to the human species. Host PIN1 apparently facilitates the virion uncoating. On the other hand, interactions with PDZD8 or CYPA stabilize the capsid. Encapsulates and protects viral dimeric unspliced genomic RNA (gRNA). Binds these RNAs through its zinc fingers. Acts as a nucleic acid chaperone which is involved in rearangement of nucleic acid secondary structure during gRNA retrotranscription. Also facilitates template switch leading to recombination. As part of the polyprotein, participates in gRNA dimerization, packaging, tRNA incorporation and virion assembly. In terms of biological role, aspartyl protease that mediates proteolytic cleavages of Gag and Gag-Pol polyproteins during or shortly after the release of the virion from the plasma membrane. Cleavages take place as an ordered, step-wise cascade to yield mature proteins. This process is called maturation. Displays maximal activity during the budding process just prior to particle release from the cell. Also cleaves Nef and Vif, probably concomitantly with viral structural proteins on maturation of virus particles. Hydrolyzes host EIF4GI and PABP1 in order to shut off the capped cellular mRNA translation. The resulting inhibition of cellular protein synthesis serves to ensure maximal viral gene expression and to evade host immune response. Also mediates cleavage of host YTHDF3. Mediates cleavage of host CARD8, thereby activating the CARD8 inflammasome, leading to the clearance of latent HIV-1 in patient CD4(+) T-cells after viral reactivation; in contrast, HIV-1 can evade CARD8-sensing when its protease remains inactive in infected cells prior to viral budding. Its function is as follows. Multifunctional enzyme that converts the viral RNA genome into dsDNA in the cytoplasm, shortly after virus entry into the cell. This enzyme displays a DNA polymerase activity that can copy either DNA or RNA templates, and a ribonuclease H (RNase H) activity that cleaves the RNA strand of RNA-DNA heteroduplexes in a partially processive 3' to 5' endonucleasic mode. Conversion of viral genomic RNA into dsDNA requires many steps. A tRNA(3)-Lys binds to the primer-binding site (PBS) situated at the 5'-end of the viral RNA. RT uses the 3' end of the tRNA primer to perform a short round of RNA-dependent minus-strand DNA synthesis. The reading proceeds through the U5 region and ends after the repeated (R) region which is present at both ends of viral RNA. The portion of the RNA-DNA heteroduplex is digested by the RNase H, resulting in a ssDNA product attached to the tRNA primer. This ssDNA/tRNA hybridizes with the identical R region situated at the 3' end of viral RNA. This template exchange, known as minus-strand DNA strong stop transfer, can be either intra- or intermolecular. RT uses the 3' end of this newly synthesized short ssDNA to perform the RNA-dependent minus-strand DNA synthesis of the whole template. RNase H digests the RNA template except for two polypurine tracts (PPTs) situated at the 5'-end and near the center of the genome. It is not clear if both polymerase and RNase H activities are simultaneous. RNase H probably can proceed both in a polymerase-dependent (RNA cut into small fragments by the same RT performing DNA synthesis) and a polymerase-independent mode (cleavage of remaining RNA fragments by free RTs). Secondly, RT performs DNA-directed plus-strand DNA synthesis using the PPTs that have not been removed by RNase H as primers. PPTs and tRNA primers are then removed by RNase H. The 3' and 5' ssDNA PBS regions hybridize to form a circular dsDNA intermediate. Strand displacement synthesis by RT to the PBS and PPT ends produces a blunt ended, linear dsDNA copy of the viral genome that includes long terminal repeats (LTRs) at both ends. Functionally, catalyzes viral DNA integration into the host chromosome, by performing a series of DNA cutting and joining reactions. This enzyme activity takes place after virion entry into a cell and reverse transcription of the RNA genome in dsDNA. The first step in the integration process is 3' processing. This step requires a complex comprising the viral genome, matrix protein, Vpr and integrase. This complex is called the pre-integration complex (PIC). The integrase protein removes 2 nucleotides from each 3' end of the viral DNA, leaving recessed CA OH's at the 3' ends. In the second step, the PIC enters cell nucleus. This process is mediated through integrase and Vpr proteins, and allows the virus to infect a non dividing cell. This ability to enter the nucleus is specific of lentiviruses, other retroviruses cannot and rely on cell division to access cell chromosomes. In the third step, termed strand transfer, the integrase protein joins the previously processed 3' ends to the 5' ends of strands of target cellular DNA at the site of integration. The 5'-ends are produced by integrase-catalyzed staggered cuts, 5 bp apart. A Y-shaped, gapped, recombination intermediate results, with the 5'-ends of the viral DNA strands and the 3' ends of target DNA strands remaining unjoined, flanking a gap of 5 bp. The last step is viral DNA integration into host chromosome. This involves host DNA repair synthesis in which the 5 bp gaps between the unjoined strands are filled in and then ligated. Since this process occurs at both cuts flanking the HIV genome, a 5 bp duplication of host DNA is produced at the ends of HIV-1 integration. Alternatively, Integrase may catalyze the excision of viral DNA just after strand transfer, this is termed disintegration. In Homo sapiens (Human), this protein is Gag-Pol polyprotein (gag-pol).